The following is a 391-amino-acid chain: MSSENLPQSPERAESPQAPRRKPRVAVVFGGRSSEHGISVVTAGAVMRAIDRTTYDVLPIGITTDGRWALTADEPERMAITDRKVPDVDRLTESAEGSVVLSVDPGSREVVYTEPGSVPKALGEVDVVFPVLHGPYGEDGTLQGLLELSGVPYVGAGVLASAVGQDKEYMKRVFLSFGLPVGPYEVVRPREWDNDPAAARERIVDFAGEHGWPLFIKPARGGSSMGITKVDSVEGLDAAIEEARRHDPKFLVESLLRGREIECGVLEFEDGPRASVPAEIPPVTSHDFYDFEAKYIDSAAGLVPAPLTEEQTAEVRRLAVAAFDAVSCEGLVRADFFLTEDGTFVINEINTLPGFTPISMYPRMWQESGVDYPELVDRLIQAALSRSTGLR.

The tract at residues 1-24 is disordered; sequence MSSENLPQSPERAESPQAPRRKPR. The 211-residue stretch at 171 to 381 folds into the ATP-grasp domain; it reads KRVFLSFGLP…YPELVDRLIQ (211 aa). 207-262 is an ATP binding site; sequence AGEHGWPLFIKPARGGSSMGITKVDSVEGLDAAIEEARRHDPKFLVESLLRGREIE. The Mg(2+) site is built by Asp335, Glu348, and Asn350.

It belongs to the D-alanine--D-alanine ligase family. Requires Mg(2+) as cofactor. It depends on Mn(2+) as a cofactor.

The protein localises to the cytoplasm. It carries out the reaction 2 D-alanine + ATP = D-alanyl-D-alanine + ADP + phosphate + H(+). The protein operates within cell wall biogenesis; peptidoglycan biosynthesis. Cell wall formation. The sequence is that of D-alanine--D-alanine ligase from Streptomyces griseus subsp. griseus (strain JCM 4626 / CBS 651.72 / NBRC 13350 / KCC S-0626 / ISP 5235).